A 335-amino-acid chain; its full sequence is Adenosine deaminase (335 aa).

Positions 12 and 14 each coordinate Zn(2+). His-14 and Asp-16 together coordinate substrate. A Zn(2+)-binding site is contributed by His-197. Residue Glu-200 is the Proton donor of the active site. Residue Asp-278 participates in Zn(2+) binding.

This sequence belongs to the metallo-dependent hydrolases superfamily. Adenosine and AMP deaminases family. Adenosine deaminase subfamily. Zn(2+) serves as cofactor.

The enzyme catalyses adenosine + H2O + H(+) = inosine + NH4(+). It carries out the reaction 2'-deoxyadenosine + H2O + H(+) = 2'-deoxyinosine + NH4(+). In terms of biological role, catalyzes the hydrolytic deamination of adenosine and 2-deoxyadenosine. The protein is Adenosine deaminase of Clostridium botulinum (strain Kyoto / Type A2).